Reading from the N-terminus, the 414-residue chain is Ribulose bisphosphate carboxylase/oxygenase activase (414 aa).

37 to 44 (GRKGEGKT) serves as a coordination point for ATP. Residues 296-326 (RGYQTAPPPEAPVIQPVNNSSHKQKTSNTHL) are disordered. Residues 311–326 (PVNNSSHKQKTSNTHL) show a composition bias toward polar residues.

This sequence belongs to the RuBisCO activase family.

Activation of RuBisCO (ribulose-1,5-bisohosphate carboxylase/oxygenase; EC 4.1.1.39) involves the ATP-dependent carboxylation of the epsilon-amino group of lysine leading to a carbamate structure. In Nostoc sp. (strain PCC 7120 / SAG 25.82 / UTEX 2576), this protein is Ribulose bisphosphate carboxylase/oxygenase activase (rca).